Here is a 620-residue protein sequence, read N- to C-terminus: Chaperone protein HscA homolog (620 aa).

Belongs to the heat shock protein 70 family.

In terms of biological role, chaperone involved in the maturation of iron-sulfur cluster-containing proteins. Has a low intrinsic ATPase activity which is markedly stimulated by HscB. The chain is Chaperone protein HscA homolog from Shewanella loihica (strain ATCC BAA-1088 / PV-4).